The chain runs to 514 residues: Cobyric acid synthase (514 aa).

In terms of domain architecture, GATase cobBQ-type spans 263–457 (ALDVAVIRLP…LHGIFDNDPL (195 aa)). The active-site Nucleophile is Cys344. The active site involves His449.

Belongs to the CobB/CobQ family. CobQ subfamily.

It functions in the pathway cofactor biosynthesis; adenosylcobalamin biosynthesis. Its function is as follows. Catalyzes amidations at positions B, D, E, and G on adenosylcobyrinic A,C-diamide. NH(2) groups are provided by glutamine, and one molecule of ATP is hydrogenolyzed for each amidation. In Desulfitobacterium hafniense (strain DSM 10664 / DCB-2), this protein is Cobyric acid synthase.